The sequence spans 1024 residues: SWI/SNF-related matrix-associated actin-dependent regulator of chromatin subfamily A containing DEAD/H box 1 (1024 aa).

M1 carries the post-translational modification N-acetylmethionine. The segment at 1 to 83 is disordered; that stretch reads MNLFNLDRFR…NESKASLSCF (83 aa). The span at 7–19 shows a compositional bias: basic and acidic residues; the sequence is DRFRFEKRSKIEE. T54 bears the Phosphothreonine mark. S57 carries the post-translational modification Phosphoserine. Residue K77 forms a Glycyl lysine isopeptide (Lys-Gly) (interchain with G-Cter in SUMO2) linkage. Phosphoserine occurs at positions 79, 124, 127, 132, 145, and 151. The 43-residue stretch at 156-198 folds into the CUE 1 domain; the sequence is LKDAKLQTLKELFPQRSDSDLLKLIDSTSTMDGAIAAALLKFG. The interval 201–250 is disordered; it reads GGGPRKRKLSSSSEAYEEDEANDDQSLKKPRGDRREESNESAEASSNWEK. A phosphoserine mark is found at S210 and S213. Y216 carries the post-translational modification Phosphotyrosine. Phosphoserine is present on residues S238 and S241. The region spanning 250-293 is the CUE 2 domain; the sequence is KQESIVLKLQKEFPNFDKQELREVLKEHEWMYTEALESLKVFAE. S301 carries the post-translational modification Phosphoserine. Residues 331 to 369 are disordered; that stretch reads SMKPQNGFNKKRKKNVFNPKKAVEDSEYDSGSDAGSSLD. Residues K333 and K469 each participate in a glycyl lysine isopeptide (Lys-Gly) (interchain with G-Cter in SUMO2) cross-link. The region spanning 507–675 is the Helicase ATP-binding domain; sequence ALVHKHGLNG…MSLLNFVMPH (169 aa). Residue 519-527 participates in ATP binding; the sequence is ADEMGLGKT. Positions 626-629 match the DEGH box motif; the sequence is DEGH. Residues 719–736 carry the Nuclear localization signal motif; that stretch reads RRVKEEVLKLLPPKKDQI. A Glycyl lysine isopeptide (Lys-Gly) (interchain with G-Cter in SUMO2) cross-link involves residue K722. Positions 856 to 1008 constitute a Helicase C-terminal domain; it reads TLGCILSELK…MTTVDEADEG (153 aa). 895–902 lines the ATP pocket; sequence YLRLDGKT. Residue K994 forms a Glycyl lysine isopeptide (Lys-Gly) (interchain with G-Cter in SUMO2) linkage. The short motif at 1003–1006 is the DEAD box element; the sequence is DEAD.

It belongs to the SNF2/RAD54 helicase family. As to quaternary structure, binds to DNA preferentially in the vicinity of transcriptional start sites. Interacts with MSH2 and TRIM28. Part of a complex composed of TRIM28, HDAC1, HDAC2 and EHMT2. Interacts with PCNA.

The protein resides in the nucleus. The protein localises to the chromosome. The catalysed reaction is ATP + H2O = ADP + phosphate + H(+). DNA helicase that possesses intrinsic ATP-dependent nucleosome-remodeling activity and is both required for DNA repair and heterochromatin organization. Promotes DNA end resection of double-strand breaks (DSBs) following DNA damage: probably acts by weakening histone DNA interactions in nucleosomes flanking DSBs. Required for the restoration of heterochromatin organization after replication. Acts at replication sites to facilitate the maintenance of heterochromatin by directing H3 and H4 histones deacetylation, H3 'Lys-9' trimethylation (H3K9me3) and restoration of silencing. In Rattus norvegicus (Rat), this protein is SWI/SNF-related matrix-associated actin-dependent regulator of chromatin subfamily A containing DEAD/H box 1 (Smarcad1).